The primary structure comprises 336 residues: Aspartate--ammonia ligase (336 aa).

This sequence belongs to the class-II aminoacyl-tRNA synthetase family. AsnA subfamily.

The protein localises to the cytoplasm. The catalysed reaction is L-aspartate + NH4(+) + ATP = L-asparagine + AMP + diphosphate + H(+). The protein operates within amino-acid biosynthesis; L-asparagine biosynthesis; L-asparagine from L-aspartate (ammonia route): step 1/1. This chain is Aspartate--ammonia ligase, found in Limosilactobacillus reuteri (strain DSM 20016) (Lactobacillus reuteri).